We begin with the raw amino-acid sequence, 534 residues long: Probable glycine dehydrogenase (decarboxylating) subunit 2 (534 aa).

Lysine 273 is modified (N6-(pyridoxal phosphate)lysine).

The protein belongs to the GcvP family. C-terminal subunit subfamily. As to quaternary structure, the glycine cleavage system is composed of four proteins: P, T, L and H. In this organism, the P 'protein' is a heterodimer of two subunits. Pyridoxal 5'-phosphate serves as cofactor.

The catalysed reaction is N(6)-[(R)-lipoyl]-L-lysyl-[glycine-cleavage complex H protein] + glycine + H(+) = N(6)-[(R)-S(8)-aminomethyldihydrolipoyl]-L-lysyl-[glycine-cleavage complex H protein] + CO2. The glycine cleavage system catalyzes the degradation of glycine. The P protein binds the alpha-amino group of glycine through its pyridoxal phosphate cofactor; CO(2) is released and the remaining methylamine moiety is then transferred to the lipoamide cofactor of the H protein. The chain is Probable glycine dehydrogenase (decarboxylating) subunit 2 from Bacillus cereus (strain ATCC 14579 / DSM 31 / CCUG 7414 / JCM 2152 / NBRC 15305 / NCIMB 9373 / NCTC 2599 / NRRL B-3711).